A 157-amino-acid chain; its full sequence is 2-C-methyl-D-erythritol 2,4-cyclodiphosphate synthase (157 aa).

Positions 8 and 10 each coordinate a divalent metal cation. 4-CDP-2-C-methyl-D-erythritol 2-phosphate contacts are provided by residues 8-10 (DVH) and 34-35 (HS). H42 provides a ligand contact to a divalent metal cation. 4-CDP-2-C-methyl-D-erythritol 2-phosphate contacts are provided by residues 56 to 58 (DIG), 132 to 135 (TTNE), and R142.

It belongs to the IspF family. As to quaternary structure, homotrimer. It depends on a divalent metal cation as a cofactor.

It carries out the reaction 4-CDP-2-C-methyl-D-erythritol 2-phosphate = 2-C-methyl-D-erythritol 2,4-cyclic diphosphate + CMP. It functions in the pathway isoprenoid biosynthesis; isopentenyl diphosphate biosynthesis via DXP pathway; isopentenyl diphosphate from 1-deoxy-D-xylulose 5-phosphate: step 4/6. Functionally, involved in the biosynthesis of isopentenyl diphosphate (IPP) and dimethylallyl diphosphate (DMAPP), two major building blocks of isoprenoid compounds. Catalyzes the conversion of 4-diphosphocytidyl-2-C-methyl-D-erythritol 2-phosphate (CDP-ME2P) to 2-C-methyl-D-erythritol 2,4-cyclodiphosphate (ME-CPP) with a corresponding release of cytidine 5-monophosphate (CMP). The chain is 2-C-methyl-D-erythritol 2,4-cyclodiphosphate synthase from Chlorobium phaeovibrioides (strain DSM 265 / 1930) (Prosthecochloris vibrioformis (strain DSM 265)).